The chain runs to 148 residues: Tetratricopeptide repeat protein 32 (148 aa).

3 TPR repeats span residues 12-45, 55-88, and 89-122; these read SSAALATAQARFSRGEFAEARELYSAFIGQCARH, ATAYNNRGQTKYFSVDFYEAMDDYTSAIEILPSF, and EVPYYNRGLIRYRLGYFDEALEDFKKALDLNPGF.

This is Tetratricopeptide repeat protein 32 (Ttc32) from Mus musculus (Mouse).